The chain runs to 209 residues: Redox-sensing transcriptional repressor Rex (209 aa).

Residues 16 to 55 (VYIQVLTGLKRDGVEVISSEKLARACSVNPSQIRKDLAYF) constitute a DNA-binding region (H-T-H motif). NAD(+) is bound at residue 90–95 (GVGNLG).

It belongs to the transcriptional regulatory Rex family. As to quaternary structure, homodimer.

Its subcellular location is the cytoplasm. Functionally, modulates transcription in response to changes in cellular NADH/NAD(+) redox state. This is Redox-sensing transcriptional repressor Rex from Maridesulfovibrio salexigens (strain ATCC 14822 / DSM 2638 / NCIMB 8403 / VKM B-1763) (Desulfovibrio salexigens).